A 384-amino-acid chain; its full sequence is Zinc finger CCCH domain-containing protein 12 (384 aa).

2 disordered regions span residues 1 to 32 (MSHH…NLGD) and 46 to 81 (WAMN…SAAS). Residues 50–60 (PDNTSGDNNGP) show a composition bias toward polar residues. The span at 70–81 (SSSSATTTSAAS) shows a compositional bias: low complexity. 2 consecutive C3H1-type zinc fingers follow at residues 91–118 (FFKT…HTVE) and 172–200 (SFKG…HDEA). A disordered region spans residues 211 to 231 (LGPGGYGSGGGGGSGGGSVGG). Residues 212–231 (GPGGYGSGGGGGSGGGSVGG) are compositionally biased toward gly residues. The C3H1-type 3 zinc-finger motif lies at 260–288 (NWKTRICNKWEITGYCPFGAKCHFAHGAA). The segment at 299–335 (EEEGKDGVSPNPDTKQTVQNPKGLSDTTTLLSPGVPH) is disordered. The span at 309 to 329 (NPDTKQTVQNPKGLSDTTTLL) shows a compositional bias: polar residues.

The protein is Zinc finger CCCH domain-containing protein 12 of Arabidopsis thaliana (Mouse-ear cress).